The primary structure comprises 151 residues: Calmodulin (151 aa).

EF-hand domains are found at residues 10-45 (EQIS…LGQN), 46-81 (PTEA…KMKD), 83-118 (DSEE…LGEK), and 119-151 (LTDE…MLSK). The Ca(2+) site is built by Asp23, Asp25, Asp27, Ser29, Glu34, Asp59, Asp61, Asn63, Thr65, Glu70, Asp96, Asp98, Asn100, Glu107, Asp132, Asp134, Asp136, and Glu143.

This sequence belongs to the calmodulin family.

Calmodulin mediates the control of a large number of enzymes, ion channels and other proteins by Ca(2+). Among the enzymes to be stimulated by the calmodulin-Ca(2+) complex are a number of protein kinases and phosphatases. This chain is Calmodulin, found in Pneumocystis carinii.